Here is an 811-residue protein sequence, read N- to C-terminus: Phenylalanine--tRNA ligase beta subunit (811 aa).

Residues A40–D156 form the tRNA-binding domain. Residues K411–Y486 form the B5 domain. Residues D464, D470, E473, and E474 each contribute to the Mg(2+) site. One can recognise an FDX-ACB domain in the interval P717–R810.

It belongs to the phenylalanyl-tRNA synthetase beta subunit family. Type 1 subfamily. In terms of assembly, tetramer of two alpha and two beta subunits. Mg(2+) is required as a cofactor.

Its subcellular location is the cytoplasm. It carries out the reaction tRNA(Phe) + L-phenylalanine + ATP = L-phenylalanyl-tRNA(Phe) + AMP + diphosphate + H(+). This chain is Phenylalanine--tRNA ligase beta subunit, found in Oceanobacillus iheyensis (strain DSM 14371 / CIP 107618 / JCM 11309 / KCTC 3954 / HTE831).